A 43-amino-acid chain; its full sequence is Protein PsbN 2 (43 aa).

A helical transmembrane segment spans residues 4-24 (ATILGISIAAALVGITVLALY).

This sequence belongs to the PsbN family.

The protein resides in the cellular thylakoid membrane. In terms of biological role, may play a role in photosystem I and II biogenesis. The chain is Protein PsbN 2 from Microcystis aeruginosa (strain NIES-843 / IAM M-2473).